Here is a 359-residue protein sequence, read N- to C-terminus: MVETSTSLVKLEQDGSLFLPPGFRFHPTDAEVILSYLLQKFLNPSFTSLPIGEVDLNKCEPWDLPSKAKMGEKEWYFFSHKDMKYPTGMRTNRATKEGYWKATGKDREIFNLQPTSYGGSSNNKNNKQLVGMKKTLVFYMGRAPKGTKTNWVMHEFRLHANLHNDNPNLRLNLKDEWVVCKVFHKKGDDREAINKQQAQAAAVDQYSAGTPNNGSSVEAGDDDDDLFQLDSIIDPSIYFSNSSAANILSAPPNMSNSVVAANYGASTTTTGTASAGSFQQQPNYCSLINKSISSSNVSSWNNMPPPPPVAEGGVHGIGSSYSLQHQAAMVKALRDVIRLPNPLGMPQYKLDDAYLWDSS.

The region spanning 19–185 (LPPGFRFHPT…EWVVCKVFHK (167 aa)) is the NAC domain. A DNA-binding region spans residues 130 to 191 (VGMKKTLVFY…VFHKKGDDRE (62 aa)).

Expressed in roots. Expressed at low levels in leaves, stems and panicles.

The protein localises to the nucleus. Functionally, transcription activator involved in responses to drought stress and salt stress. Transactivates the stress response genes LEA19 and PM19L. In Oryza sativa subsp. japonica (Rice), this protein is NAC domain-containing protein 45.